The primary structure comprises 237 residues: tRNA1(Val) (adenine(37)-N6)-methyltransferase (237 aa).

It belongs to the methyltransferase superfamily. tRNA (adenine-N(6)-)-methyltransferase family.

Its subcellular location is the cytoplasm. The enzyme catalyses adenosine(37) in tRNA1(Val) + S-adenosyl-L-methionine = N(6)-methyladenosine(37) in tRNA1(Val) + S-adenosyl-L-homocysteine + H(+). Its function is as follows. Specifically methylates the adenine in position 37 of tRNA(1)(Val) (anticodon cmo5UAC). The polypeptide is tRNA1(Val) (adenine(37)-N6)-methyltransferase (Pasteurella multocida (strain Pm70)).